Consider the following 87-residue polypeptide: Small ribosomal subunit protein bS20 (87 aa).

The segment at 1-22 (MANHKSALKRHKQSLKRAARNR) is disordered.

Belongs to the bacterial ribosomal protein bS20 family.

Its function is as follows. Binds directly to 16S ribosomal RNA. The protein is Small ribosomal subunit protein bS20 of Nitratidesulfovibrio vulgaris (strain DP4) (Desulfovibrio vulgaris).